A 661-amino-acid polypeptide reads, in one-letter code: Potassium voltage-gated channel subfamily KQT member 1 (661 aa).

Disordered stretches follow at residues 1–29 (MAAA…ESAG) and 42–88 (ESGP…SLDP). At 1–119 (MAAASTPPRA…YNFLERPTGW (119 aa)) the chain is on the cytoplasmic side. Residue Ser27 is modified to Phosphoserine; by PKA. The segment covering 54 to 85 (VSPPSAPEPAPPASPASPAPPAADQGPQPPVS) has biased composition (pro residues). The chain crosses the membrane as a helical span at residues 120–141 (KCFAYHFTVFLIVLVCLIFSVL). Residues 142–152 (STIEQYATLAT) lie on the Extracellular side of the membrane. Residues 153–175 (GTLFWMEIVLVVFFGTEYVVRLW) traverse the membrane as a helical segment. Residues 176 to 191 (SAGCRSKYVGLWGRLR) lie on the Cytoplasmic side of the membrane. Residues 192–217 (FARKPISIIDLIVVVASMVVLCVGSK) form a helical membrane-spanning segment. Topologically, residues 218 to 225 (GQVFATSA) are extracellular. The chain crosses the membrane as a helical; Voltage-sensor span at residues 226-241 (IRGIRFLQILRMLHVD). The interaction with KCNE3 stretch occupies residues 237–245 (MLHVDRQGG). The Cytoplasmic portion of the chain corresponds to 242–259 (RQGGTWRLLGSVVFIHRQ). A 1,2-diacyl-sn-glycero-3-phospho-(1D-myo-inositol-4,5-bisphosphate) is bound at residue Gln243. Residues 260 to 282 (ELITTLYIGFLGLIFSSYFVYLA) traverse the membrane as a helical segment. The Extracellular segment spans residues 283–298 (EKDAVNESGRVEFGSY). N-linked (GlcNAc...) asparagine glycosylation is present at Asn288. Residues 299-319 (ADALWWGVVTVTTIGYGDKVP) constitute an intramembrane region (pore-forming). Topologically, residues 320–321 (QT) are extracellular. The chain crosses the membrane as a helical span at residues 322 to 347 (WVGKTIASCFSVFAISFFALPAGILG). The Cytoplasmic portion of the chain corresponds to 348–661 (SGFALKVQQK…VPRRDPEEGS (314 aa)). Residues 369–381 (AAASLIQTAWRCY) are interaction with CALM. A phosphoserine mark is found at Ser406 and Ser408. Residues 514–528 (KVIRRMQYFVAKKKF) form an interaction with CALM; calcium-dependent region. The interaction with KCNE1 C-terminus stretch occupies residues 534–571 (PYDVRDVIEQYSQGHLNLMVRIKELQRRLDQSIGKPSL). Residues 584–620 (SNSIGARLNRVEDKVTQLDQRLVLIADMLQQLLALHQ) adopt a coiled-coil conformation. The interval 587–615 (IGARLNRVEDKVTQLDQRLVLIADMLQQL) is interaction with AKAP9. The interval 588–619 (GARLNRVEDKVTQLDQRLVLIADMLQQLLALH) is C-terminal assembly domain (tetramerization). A disordered region spans residues 624-661 (HGGAHPAQARDGDPADPELFLPTYEQLTVPRRDPEEGS).

It belongs to the potassium channel family. KQT (TC 1.A.1.15) subfamily. Kv7.1/KCNQ1 sub-subfamily. As to quaternary structure, tetramer. Heterotetramer with KCNE1; targets to the membrane raft. Interacts (via C-terminus) with CALM; forms a heterooctameric structure (with 4:4 KCNQ1:CALM stoichiometry) in a calcium-independent manner. Interacts with AKAP9; targets protein kinase A (PKA) catalytic and regulatory subunits and protein phosphatase 1 (PP1) to the KCNQ1-KCNE1 complex, allowing PKA-mediated phosphorylation and increase of delayed rectifier potassium channel activity. Interacts with KCNE2; form a heterooligomer complex that targets to the membrane raft and leading to currents with an apparently instantaneous activation, a rapid deactivation process and a linear current-voltage relationship and decreases the amplitude of the outward current. Interacts with AP2M1; mediates estrogen-induced internalization via clathrin-coated vesicles. Interacts with NEDD4L; promotes internalization and decreases I(Ks) currents. Interacts with USP2; counteracts the NEDD4L-specific down-regulation of I(Ks) and restore plasma membrane localization. Heterotetramer with KCNQ5; has a voltage-gated potassium channel activity. Interacts with KCNE3; four KCNE3 molecules are bound to one KCNQ1 tetramer (4:4 KCNQ1:KCNE3 stoichiometry); alters membrane raft localization; affects KCNQ1 structure and gating properties. Interacts with KCNE4; impairs KCNQ1 localization in lipid rafts and inhibits voltage-gated potassium channel activity. Interacts with KCNE5; impairs KCNQ1 localization in lipid rafts and only conducts current upon strong and continued depolarization. Interacts with SLC5A3; forms coregulatory channel-transporter complexes that modulate Na(+)-coupled myo-inositol influx through the transporter. Phosphorylation at Ser-27 by PKA; increases delayed rectifier potassium channel activity of the KCNQ1-KCNE1 complex through a macromolecular complex that includes PKA, PP1, and the targeting protein AKAP9. Post-translationally, ubiquitinated by NEDD4L; promotes internalization. The ubiquitinylated form is internalized through a clathrin-mediated endocytosis by interacting with AP2M1 and is recycled back to the cell membrane via RAB4A and RAB11A. In terms of processing, deubiquitinated by USP2; counteracts the NEDD4L-specific down-regulation of I(Ks) and restores the membrane localization.

Its subcellular location is the cell membrane. It localises to the cytoplasmic vesicle membrane. The protein resides in the early endosome. It is found in the membrane raft. The protein localises to the endoplasmic reticulum. Its subcellular location is the basolateral cell membrane. It localises to the apical cell membrane. The catalysed reaction is K(+)(in) = K(+)(out). Its activity is regulated as follows. PIP2 molecule is essential to activate KCNQ channels by inducing the coupling of the voltage-sensing domain (VSD) and the pore-forming domain (PD). Upon channel activation, PIP2 disrupts the VSD-calmodulin/CALM interactions, causing the release of CALM from the VSD which triggers the opening of the gate. Calcium potentiates KCNQ1 channel current through calcium-bound CALM. Calcium-bound CALM competes with PIP2 to stabilize the channel open state. Functionally, pore-forming subunit of the voltage-gated potassium (Kv) channel involved in the regulation of cardiomyocyte excitability and important in normal development and functions of myocardium, inner ear, stomach and colon. Associates with KCNE beta subunits that modulates current kinetics. Induces a voltage-dependent by rapidly activating and slowly deactivating potassium-selective outward current. Also promotes a delayed voltage activated potassium current showing outward rectification characteristic. During beta-adrenergic receptor stimulation participates in cardiac repolarization by associating with KCNE1 to form the I(Ks) cardiac potassium current that increases the amplitude and slows down the activation kinetics of outward potassium current I(Ks). Muscarinic agonist oxotremorine-M strongly suppresses KCNQ1/KCNE1 current. When associated with KCNE3, forms the potassium channel that is important for cyclic AMP-stimulated intestinal secretion of chloride ions. This interaction with KCNE3 is reduced by 17beta-estradiol, resulting in the reduction of currents. During conditions of increased substrate load, maintains the driving force for proximal tubular and intestinal sodium ions absorption, gastric acid secretion, and cAMP-induced jejunal chloride ions secretion. Allows the provision of potassium ions to the luminal membrane of the secretory canaliculus in the resting state as well as during stimulated acid secretion. When associated with KCNE2, forms a heterooligomer complex leading to currents with an apparently instantaneous activation, a rapid deactivation process and a linear current-voltage relationship and decreases the amplitude of the outward current. When associated with KCNE4, inhibits voltage-gated potassium channel activity. When associated with KCNE5, this complex only conducts current upon strong and continued depolarization. Also forms a heterotetramer with KCNQ5 that has a voltage-gated potassium channel activity. Binds with phosphatidylinositol 4,5-bisphosphate. KCNQ1-KCNE2 channel associates with Na(+)-coupled myo-inositol symporter in the apical membrane of choroid plexus epithelium and regulates the myo-inositol gradient between blood and cerebrospinal fluid with an impact on neuron excitability. This is Potassium voltage-gated channel subfamily KQT member 1 from Oryctolagus cuniculus (Rabbit).